A 652-amino-acid chain; its full sequence is Leucine-rich repeat-containing protein 4 (652 aa).

The first 40 residues, 1 to 40 (MKLLWQVTVHHTWNAVLLPVVYLTAQVWILCAAIAAAASA), serve as a signal peptide directing secretion. At 1-526 (MKLLWQVTVH…SLDEVMKTTK (526 aa)) the chain is on the extracellular side. The LRRNT domain maps to 41–74 (GPQNCPSVCSCSNQFSKVVCTRRGLSEVPQGIPS). Intrachain disulfides connect Cys45-Cys51 and Cys49-Cys60. LRR repeat units lie at residues 75–96 (NTRY…TFRH), 99–120 (HLEV…AFNG), 123–144 (SLNT…AFEY), 147–168 (KLRE…AFNR), 171–193 (SLMR…AFEG), 196–217 (NLKY…TPLV), 218–239 (GLEE…SFHG), 242–263 (SLKK…AFDG), and 266–287 (SLVE…LFTP). The LRRCT domain occupies 299 to 351 (NPWNCDCDILWLAWWLREYIPTNSTCCGRCHAPMHMRGRYLVEVDQASFQCSA). 2 cysteine pairs are disulfide-bonded: Cys303-Cys328 and Cys305-Cys349. N-linked (GlcNAc...) asparagine glycans are attached at residues Asn321 and Asn362. The Ig-like C2-type domain maps to 352–441 (PFIMDAPRDL…SNASAYLNVS (90 aa)). An intrachain disulfide couples Cys373 to Cys423. The helical transmembrane segment at 527-547 (IIIGCFVAVTLLAAAMLIVFY) threads the bilayer. The Cytoplasmic segment spans residues 548-652 (KLRKRHQQRS…TKDKVQETQI (105 aa)).

As to quaternary structure, interacts (via LRR repeats) with NTNG2. Interacts with DLG4. Found in a complex with NMDA receptors. Post-translationally, N-glycosylated. In terms of tissue distribution, mainly expressed in the brain. Expression is concentrated in the olfactory bulb, cortex, hippocampus and cerebellum in adult brain. Detected both embryonically and postnatally with stronger expression in postnatal stages.

The protein resides in the membrane. It is found in the postsynaptic cell membrane. In terms of biological role, synaptic adhesion protein. Regulates the formation of exitatory synapses through the recruitment of pre-and-postsynaptic proteins. Organize the lamina/pathway-specific differentiation of dendrites. Plays an important role for auditory synaptic responses. Involved in the suppression of glioma. The chain is Leucine-rich repeat-containing protein 4 (Lrrc4) from Rattus norvegicus (Rat).